The sequence spans 144 residues: D-aminoacyl-tRNA deacylase (144 aa).

The Gly-cisPro motif, important for rejection of L-amino acids signature appears at 136–137 (GP).

It belongs to the DTD family. Homodimer.

It is found in the cytoplasm. It catalyses the reaction glycyl-tRNA(Ala) + H2O = tRNA(Ala) + glycine + H(+). It carries out the reaction a D-aminoacyl-tRNA + H2O = a tRNA + a D-alpha-amino acid + H(+). In terms of biological role, an aminoacyl-tRNA editing enzyme that deacylates mischarged D-aminoacyl-tRNAs. Also deacylates mischarged glycyl-tRNA(Ala), protecting cells against glycine mischarging by AlaRS. Acts via tRNA-based rather than protein-based catalysis; rejects L-amino acids rather than detecting D-amino acids in the active site. By recycling D-aminoacyl-tRNA to D-amino acids and free tRNA molecules, this enzyme counteracts the toxicity associated with the formation of D-aminoacyl-tRNA entities in vivo and helps enforce protein L-homochirality. In Corynebacterium glutamicum (strain R), this protein is D-aminoacyl-tRNA deacylase.